The sequence spans 442 residues: tRNA-2-methylthio-N(6)-dimethylallyladenosine synthase (442 aa).

An MTTase N-terminal domain is found at 5–122 (KKVFIKTLGC…LPEMIKQKQK (118 aa)). C14, C51, C85, C159, C163, and C166 together coordinate [4Fe-4S] cluster. The Radical SAM core domain occupies 145 to 378 (KAEGAKAYVS…DLLNSNAQII (234 aa)). The TRAM domain maps to 380-442 (RQMVGTNQRI…LPNSLRGELI (63 aa)).

Belongs to the methylthiotransferase family. MiaB subfamily. In terms of assembly, monomer. [4Fe-4S] cluster is required as a cofactor.

It is found in the cytoplasm. The catalysed reaction is N(6)-dimethylallyladenosine(37) in tRNA + (sulfur carrier)-SH + AH2 + 2 S-adenosyl-L-methionine = 2-methylsulfanyl-N(6)-dimethylallyladenosine(37) in tRNA + (sulfur carrier)-H + 5'-deoxyadenosine + L-methionine + A + S-adenosyl-L-homocysteine + 2 H(+). In terms of biological role, catalyzes the methylthiolation of N6-(dimethylallyl)adenosine (i(6)A), leading to the formation of 2-methylthio-N6-(dimethylallyl)adenosine (ms(2)i(6)A) at position 37 in tRNAs that read codons beginning with uridine. In Francisella tularensis subsp. tularensis (strain FSC 198), this protein is tRNA-2-methylthio-N(6)-dimethylallyladenosine synthase.